The chain runs to 112 residues: Putative pterin-4-alpha-carbinolamine dehydratase (112 aa).

Positions 1–30 (MSDELQSRTCTPCRGDVPPMTKAEAKRQLA) are disordered.

The protein belongs to the pterin-4-alpha-carbinolamine dehydratase family.

The catalysed reaction is (4aS,6R)-4a-hydroxy-L-erythro-5,6,7,8-tetrahydrobiopterin = (6R)-L-erythro-6,7-dihydrobiopterin + H2O. In Aromatoleum aromaticum (strain DSM 19018 / LMG 30748 / EbN1) (Azoarcus sp. (strain EbN1)), this protein is Putative pterin-4-alpha-carbinolamine dehydratase.